The sequence spans 901 residues: Dipeptidyl-aminopeptidase B (901 aa).

Over residues 1–22 (MSSPRPSTSSTSSDSGLSVDTT) the composition is skewed to low complexity. The disordered stretch occupies residues 1–67 (MSSPRPSTSS…EPFLPSAKKQ (67 aa)). The Cytoplasmic segment spans residues 1-76 (MSSPRPSTSS…QAASGSRTSR (76 aa)). The chain crosses the membrane as a helical; Signal-anchor for type II membrane protein span at residues 77–97 (LIWGLVILCVAGWLWGLVLFV). Residues 98–901 (TQNRSAQQSV…VKRSLPMLVN (804 aa)) lie on the Vacuolar side of the membrane. 2 N-linked (GlcNAc...) asparagine glycosylation sites follow: Asn-334 and Asn-625. Ser-739 functions as the Charge relay system in the catalytic mechanism. Residue Asn-793 is glycosylated (N-linked (GlcNAc...) asparagine). Residues Asp-816 and His-849 each act as charge relay system in the active site.

The protein belongs to the peptidase S9B family.

Its subcellular location is the vacuole membrane. The catalysed reaction is Release of an N-terminal dipeptide, Xaa-Yaa-|-Zaa-, from a polypeptide, preferentially when Yaa is Pro, provided Zaa is neither Pro nor hydroxyproline.. Functionally, type IV dipeptidyl-peptidase which removes N-terminal dipeptides sequentially from polypeptides having unsubstituted N-termini provided that the penultimate residue is proline. The chain is Dipeptidyl-aminopeptidase B (dapB) from Aspergillus niger.